A 449-amino-acid chain; its full sequence is Glutamyl-tRNA reductase (449 aa).

Residues Thr49–Arg52, Ser109, Glu114–Gln116, and Gln120 each bind substrate. Cys50 (nucleophile) is an active-site residue. Position 189-194 (Gly189–Ser194) interacts with NADP(+). The disordered stretch occupies residues Asn427–Arg449.

This sequence belongs to the glutamyl-tRNA reductase family. In terms of assembly, homodimer.

It catalyses the reaction (S)-4-amino-5-oxopentanoate + tRNA(Glu) + NADP(+) = L-glutamyl-tRNA(Glu) + NADPH + H(+). It participates in porphyrin-containing compound metabolism; protoporphyrin-IX biosynthesis; 5-aminolevulinate from L-glutamyl-tRNA(Glu): step 1/2. In terms of biological role, catalyzes the NADPH-dependent reduction of glutamyl-tRNA(Glu) to glutamate 1-semialdehyde (GSA). In Carboxydothermus hydrogenoformans (strain ATCC BAA-161 / DSM 6008 / Z-2901), this protein is Glutamyl-tRNA reductase.